The primary structure comprises 575 residues: Alpha-humulene synthase (575 aa).

Residues D325, D329, D469, and E477 each coordinate Mg(2+). The DDXXD motif signature appears at 325–329; it reads DDLYD.

It belongs to the terpene synthase family. Tpsa subfamily. Requires Mg(2+) as cofactor. Mn(2+) serves as cofactor.

It carries out the reaction (2E,6E)-farnesyl diphosphate = alpha-humulene + diphosphate. It functions in the pathway sesquiterpene biosynthesis. Its pathway is terpene metabolism; oleoresin biosynthesis. Terpene synthase (TPS) involved in the biosynthesis of sesquiterpene natural products included in conifer oleoresin secretions and volatile emissions; these compounds contribute to biotic and abiotic stress defense against herbivores and pathogens. Catalyzes the conversion of (2E,6E)-farnesyl diphosphate (FPP) to (1E,4E,8E)-alpha-humulene. The protein is Alpha-humulene synthase of Picea glauca (White spruce).